Here is a 177-residue protein sequence, read N- to C-terminus: Nucleoside triphosphate/diphosphate phosphatase (177 aa).

Arginine 23 serves as the catalytic Proton donor. 6 residues coordinate Mg(2+): asparagine 87, aspartate 103, aspartate 105, aspartate 107, aspartate 120, and glutamate 123.

It belongs to the Ntdp family. Mg(2+) serves as cofactor.

It carries out the reaction a ribonucleoside 5'-triphosphate + H2O = a ribonucleoside 5'-diphosphate + phosphate + H(+). The catalysed reaction is a ribonucleoside 5'-diphosphate + H2O = a ribonucleoside 5'-phosphate + phosphate + H(+). Functionally, has nucleoside phosphatase activity towards nucleoside triphosphates and nucleoside diphosphates. The chain is Nucleoside triphosphate/diphosphate phosphatase from Streptococcus pneumoniae (strain ATCC 700669 / Spain 23F-1).